The sequence spans 617 residues: tRNA-dihydrouridine(47) synthase [NAD(P)(+)] (617 aa).

The C3H1-type zinc-finger motif lies at 42-70 (KENNALCPAISIGNECPYKENCKFPHDVE). Residues 160-193 (EEKPDPSSKVSNIPEENRDATSAISEGKETESVS) form a disordered region. FMN-binding positions include 245–247 (PLT) and Q308. The active-site Proton donor is C340. FMN is bound by residues K380, H411, 460 to 462 (NGD), and 483 to 484 (AR).

Belongs to the Dus family. Dus3 subfamily. FMN is required as a cofactor.

Its subcellular location is the cytoplasm. It is found in the nucleus. It carries out the reaction 5,6-dihydrouridine(47) in tRNA + NAD(+) = uridine(47) in tRNA + NADH + H(+). The enzyme catalyses 5,6-dihydrouridine(47) in tRNA + NADP(+) = uridine(47) in tRNA + NADPH + H(+). It catalyses the reaction a 5,6-dihydrouridine in mRNA + NAD(+) = a uridine in mRNA + NADH + H(+). The catalysed reaction is a 5,6-dihydrouridine in mRNA + NADP(+) = a uridine in mRNA + NADPH + H(+). Catalyzes the synthesis of dihydrouridine, a modified base, in various RNAs, such as tRNAs and mRNAs. Modifies the uridine in position 47 (U47) in the D-loop of tRNAs. Also able to mediate formation of dihydrouridine outside of the D-loop of tRNAs. Catalyzes the synthesis of dihydrouridine in some mRNAs, thereby affecting their translation. Dus3-mediated dihydrouridylation of the mRNA encoding alpha-tubulin nda2 is required for meiotic chromosome segregation. The chain is tRNA-dihydrouridine(47) synthase [NAD(P)(+)] from Schizosaccharomyces pombe (strain 972 / ATCC 24843) (Fission yeast).